Consider the following 322-residue polypeptide: NADH-quinone oxidoreductase subunit H (322 aa).

A run of 8 helical transmembrane segments spans residues 14-34 (IFMH…YMSF), 81-101 (YIFV…IPVI), 114-134 (VGVL…LLAG), 149-169 (SIAQ…GIVA), 186-206 (LWNI…GMAL), 237-257 (FFIS…TLFF), 265-285 (FPPV…FVLI), and 302-322 (WKFL…YILI).

This sequence belongs to the complex I subunit 1 family. As to quaternary structure, NDH-1 is composed of 13 different subunits. Subunits NuoA, H, J, K, L, M, N constitute the membrane sector of the complex.

Its subcellular location is the cell inner membrane. It carries out the reaction a quinone + NADH + 5 H(+)(in) = a quinol + NAD(+) + 4 H(+)(out). Its function is as follows. NDH-1 shuttles electrons from NADH, via FMN and iron-sulfur (Fe-S) centers, to quinones in the respiratory chain. The immediate electron acceptor for the enzyme in this species is believed to be ubiquinone. Couples the redox reaction to proton translocation (for every two electrons transferred, four hydrogen ions are translocated across the cytoplasmic membrane), and thus conserves the redox energy in a proton gradient. This subunit may bind ubiquinone. In Blochmanniella floridana, this protein is NADH-quinone oxidoreductase subunit H.